The chain runs to 238 residues: Group 3 late-embryogenesis abundant protein, mitochondrial (238 aa).

The disordered stretch occupies residues 41 to 62 (SSGSGRPADNWAESQKEKAKAG). A coiled-coil region spans residues 50–202 (NWAESQKEKA…AGDLKDKAQQ (153 aa)). LEA 11-mer repeat repeat units follow at residues 64–74 (KDAQAEVGKVA), 89–99 (KDAVKQGANDL), 140–150 (KEAAENAWEKT), 151–161 (KDVAENLKDKV), 179–189 (KDRAQDAASEV), and 190–200 (KHKAGDLKDKA). 2 stretches are compositionally biased toward basic and acidic residues: residues 182 to 200 (AQDA…KDKA) and 213 to 225 (DNRK…RRDS). Positions 182-238 (AQDAASEVKHKAGDLKDKAQQVIHDATTQSGDNRKQDQQQRRDSQGSQSGQNSRSRN) are disordered. Low complexity predominate over residues 226–238 (QGSQSGQNSRSRN).

Belongs to the LEA type 4 family.

It localises to the mitochondrion. Its function is as follows. Mitochondrial heat soluble protein acting as a molecular shield in water-deficient condition. In Hypsibius exemplaris (Freshwater tardigrade), this protein is Group 3 late-embryogenesis abundant protein, mitochondrial.